The sequence spans 376 residues: Queuine tRNA-ribosyltransferase (376 aa).

The active-site Proton acceptor is the Asp-92. Residues 92–96, Asp-146, Gln-190, and Gly-217 each bind substrate; that span reads DSGGF. Residues 248 to 254 form an RNA binding region; that stretch reads GVGRPED. Asp-267 serves as the catalytic Nucleophile. The RNA binding; important for wobble base 34 recognition stretch occupies residues 272–276; sequence TRNAR. Zn(2+)-binding residues include Cys-305, Cys-307, Cys-310, and His-337.

It belongs to the queuine tRNA-ribosyltransferase family. As to quaternary structure, homodimer. Within each dimer, one monomer is responsible for RNA recognition and catalysis, while the other monomer binds to the replacement base PreQ1. The cofactor is Zn(2+).

It catalyses the reaction 7-aminomethyl-7-carbaguanine + guanosine(34) in tRNA = 7-aminomethyl-7-carbaguanosine(34) in tRNA + guanine. It participates in tRNA modification; tRNA-queuosine biosynthesis. Its function is as follows. Catalyzes the base-exchange of a guanine (G) residue with the queuine precursor 7-aminomethyl-7-deazaguanine (PreQ1) at position 34 (anticodon wobble position) in tRNAs with GU(N) anticodons (tRNA-Asp, -Asn, -His and -Tyr). Catalysis occurs through a double-displacement mechanism. The nucleophile active site attacks the C1' of nucleotide 34 to detach the guanine base from the RNA, forming a covalent enzyme-RNA intermediate. The proton acceptor active site deprotonates the incoming PreQ1, allowing a nucleophilic attack on the C1' of the ribose to form the product. After dissociation, two additional enzymatic reactions on the tRNA convert PreQ1 to queuine (Q), resulting in the hypermodified nucleoside queuosine (7-(((4,5-cis-dihydroxy-2-cyclopenten-1-yl)amino)methyl)-7-deazaguanosine). This is Queuine tRNA-ribosyltransferase from Stenotrophomonas maltophilia (strain K279a).